Here is a 378-residue protein sequence, read N- to C-terminus: Erythronate-4-phosphate dehydrogenase (378 aa).

Substrate contacts are provided by Ser45 and Thr66. NAD(+) contacts are provided by Asp146 and Thr175. Arg208 is a catalytic residue. Asp232 lines the NAD(+) pocket. The active site involves Glu237. Catalysis depends on His254, which acts as the Proton donor. Gly257 is an NAD(+) binding site. Tyr258 is a binding site for substrate.

The protein belongs to the D-isomer specific 2-hydroxyacid dehydrogenase family. PdxB subfamily. In terms of assembly, homodimer.

It is found in the cytoplasm. It carries out the reaction 4-phospho-D-erythronate + NAD(+) = (R)-3-hydroxy-2-oxo-4-phosphooxybutanoate + NADH + H(+). The protein operates within cofactor biosynthesis; pyridoxine 5'-phosphate biosynthesis; pyridoxine 5'-phosphate from D-erythrose 4-phosphate: step 2/5. Catalyzes the oxidation of erythronate-4-phosphate to 3-hydroxy-2-oxo-4-phosphonooxybutanoate. The polypeptide is Erythronate-4-phosphate dehydrogenase (Escherichia coli O17:K52:H18 (strain UMN026 / ExPEC)).